A 1374-amino-acid chain; its full sequence is Protein Dicer (1374 aa).

One can recognise a Helicase ATP-binding domain in the interval 19-206; it reads VYNIASKQNT…YHRLYQWEQL (188 aa). 32–39 lines the ATP pocket; the sequence is MRTGAGKT. Positions 145 to 148 match the DECH box motif; that stretch reads DECH. The 178-residue stretch at 340-517 folds into the Helicase C-terminal domain; the sequence is DVTDKVFKLL…SLVCEERERV (178 aa). A Dicer dsRNA-binding fold domain is found at 537-628; that stretch reads AVSLLYNFCN…KPLDFRRKIA (92 aa). RNase III domains follow at residues 916 to 1038 and 1083 to 1233; these read QALT…LDSG and SSYI…LDSG. 3 residues coordinate Mg(2+): E1123, D1219, and E1222. The segment at 1263–1355 is C-terminal dsRNA-binding fold; sequence EHKVYQLLKD…LLYSCNCKFS (93 aa). Zn(2+) is bound by residues C1275, H1312, C1350, and C1352.

It belongs to the helicase family. Dicer subfamily. Mg(2+) serves as cofactor. Mn(2+) is required as a cofactor.

The protein resides in the cytoplasm. It localises to the nucleus. In terms of biological role, required for G1 arrest and mating in response to nitrogen starvation. Ago1 regulation of cytokinesis and cell cycle checkpoints occurs downstream of dcr1. Required, indirectly, for regulated hyperphosphorylation of cdc2. Functionally, has a role in the RNA interference (RNAi) pathway which is important for heterochromatin formation, accurate chromosome segregation, centromere cohesion and telomere function during mitosis and meiosis. Digests double-stranded RNA (dsRNA) producing 21 to 23 bp dsRNAs, so-called interfering RNAs (siRNA). Required for both post-transcriptional and transcriptional gene silencing. Required for silencing at the centromeres and for initiation of transcriptionally silent heterochromatin at the mating type locus. Promotes histone H3 'Lys-10' methylation necessary for centromere function. Required for recruitment of swi6 and cohesin to an ectopic dg repeat. This is Protein Dicer (dcr1) from Schizosaccharomyces pombe (strain 972 / ATCC 24843) (Fission yeast).